We begin with the raw amino-acid sequence, 177 residues long: Large ribosomal subunit protein uL10 (177 aa).

Belongs to the universal ribosomal protein uL10 family. In terms of assembly, part of the ribosomal stalk of the 50S ribosomal subunit. The N-terminus interacts with L11 and the large rRNA to form the base of the stalk. The C-terminus forms an elongated spine to which L12 dimers bind in a sequential fashion forming a multimeric L10(L12)X complex.

Forms part of the ribosomal stalk, playing a central role in the interaction of the ribosome with GTP-bound translation factors. The chain is Large ribosomal subunit protein uL10 from Mycobacterium leprae (strain Br4923).